We begin with the raw amino-acid sequence, 320 residues long: Heterogeneous nuclear ribonucleoprotein A1-like 2 (320 aa).

The tract at residues 4 to 94 (SASPKEPEQL…EPKRAVSRED (91 aa)) is globular A domain. Phosphoserine occurs at positions 6 and 22. RRM domains lie at 14–97 (RKLF…DSQR) and 105–184 (KKIF…LPKQ). The tract at residues 95-185 (SQRPGAHLTV…EVRKALPKQE (91 aa)) is globular B domain. Positions 181 to 216 (LPKQEMASASSSQRGRRGSGNFGGGRGDGFGGNDNF) are disordered. Asymmetric dimethylarginine; alternate is present on residues Arg194, Arg206, Arg218, and Arg225. Arg194, Arg206, Arg218, and Arg225 each carry omega-N-methylarginine; alternate. Over residues 198–216 (GSGNFGGGRGDGFGGNDNF) the composition is skewed to gly residues. The segment at 218-240 (RGGNFSGRGGFGGSCGGGGYGGS) is RNA-binding RGG-box. The interval 268–305 (NQSSNFGPMKGGNFGGRSSGPYGGGGQYFAKPQNQGGY) is nuclear targeting sequence. Residues 271 to 320 (SNFGPMKGGNFGGRSSGPYGGGGQYFAKPQNQGGYGVSSSSSSYGSGRRF) are disordered. Residues 276–294 (MKGGNFGGRSSGPYGGGGQ) are compositionally biased toward gly residues. Omega-N-methylarginine is present on Arg284. Lys298 is modified (N6-acetyllysine). The segment covering 307 to 320 (VSSSSSSYGSGRRF) has biased composition (low complexity).

The protein resides in the nucleus. It is found in the cytoplasm. Involved in the packaging of pre-mRNA into hnRNP particles, transport of poly(A) mRNA from the nucleus to the cytoplasm and may modulate splice site selection. The polypeptide is Heterogeneous nuclear ribonucleoprotein A1-like 2 (HNRNPA1L2) (Homo sapiens (Human)).